The following is a 425-amino-acid chain: MRAEIISVGTELLLGHTINTDAAHVGRALSALGMDLLQVHTVGDNAGRLEAALREALNCADVVITTGGLGPTDDDMTKETVARVLGAPLEEHKDSLRRLREYFGSRPIAANQLKQAWLPRGSTAFPNRAGTAPGCAVPGKPGQWVILLPGPPSELLPMLEDSVMPFLQRMGGAVIASFMVRTFGIGEGSAALRIADLTEGANPTVAPYASDAEMFVRVTAKAENAEAAEALAKPVVDAVRGRLGDVVYGVNVSGLEAVVVEQLRQHRRSLAIAESCTGGLLAKRITDQPGASEVFGYGLITYANEAKTRLLGVPEEQLACYGAVSPQVARSMAVGVRERYGADYGLGITGVAGPGGGTEEKPVGLVYVALSCSNAVWLRVLRPQGRYLGREWTRRLASSHALDMLRRHMAGLPVEAGWADGLPQD.

Belongs to the CinA family.

The chain is CinA-like protein from Desulfovibrio desulfuricans (strain ATCC 27774 / DSM 6949 / MB).